The primary structure comprises 254 residues: 5-oxoprolinase subunit A (254 aa).

It belongs to the LamB/PxpA family. In terms of assembly, forms a complex composed of PxpA, PxpB and PxpC.

It catalyses the reaction 5-oxo-L-proline + ATP + 2 H2O = L-glutamate + ADP + phosphate + H(+). Its function is as follows. Catalyzes the cleavage of 5-oxoproline to form L-glutamate coupled to the hydrolysis of ATP to ADP and inorganic phosphate. This chain is 5-oxoprolinase subunit A, found in Heliobacterium modesticaldum (strain ATCC 51547 / Ice1).